The sequence spans 609 residues: Glutamine--fructose-6-phosphate aminotransferase [isomerizing] (609 aa).

Cys-2 acts as the Nucleophile; for GATase activity in catalysis. Residues 2-218 (CGIVGAVAQR…EGDVVEVTRR (217 aa)) enclose the Glutamine amidotransferase type-2 domain. 2 consecutive SIS domains span residues 286–426 (ADAL…LKGA) and 458–599 (LAEG…VDQP). The active-site For Fru-6P isomerization activity is the Lys-604.

As to quaternary structure, homodimer.

It localises to the cytoplasm. It catalyses the reaction D-fructose 6-phosphate + L-glutamine = D-glucosamine 6-phosphate + L-glutamate. Its function is as follows. Catalyzes the first step in hexosamine metabolism, converting fructose-6P into glucosamine-6P using glutamine as a nitrogen source. In Yersinia pestis, this protein is Glutamine--fructose-6-phosphate aminotransferase [isomerizing].